The chain runs to 257 residues: Imidazole glycerol phosphate synthase subunit HisF (257 aa).

Residues aspartate 12 and aspartate 131 contribute to the active site.

It belongs to the HisA/HisF family. Heterodimer of HisH and HisF.

Its subcellular location is the cytoplasm. It catalyses the reaction 5-[(5-phospho-1-deoxy-D-ribulos-1-ylimino)methylamino]-1-(5-phospho-beta-D-ribosyl)imidazole-4-carboxamide + L-glutamine = D-erythro-1-(imidazol-4-yl)glycerol 3-phosphate + 5-amino-1-(5-phospho-beta-D-ribosyl)imidazole-4-carboxamide + L-glutamate + H(+). The protein operates within amino-acid biosynthesis; L-histidine biosynthesis; L-histidine from 5-phospho-alpha-D-ribose 1-diphosphate: step 5/9. Its function is as follows. IGPS catalyzes the conversion of PRFAR and glutamine to IGP, AICAR and glutamate. The HisF subunit catalyzes the cyclization activity that produces IGP and AICAR from PRFAR using the ammonia provided by the HisH subunit. This chain is Imidazole glycerol phosphate synthase subunit HisF, found in Burkholderia mallei (strain NCTC 10247).